The chain runs to 380 residues: O-phospho-L-seryl-tRNA:Cys-tRNA synthase (380 aa).

Residues Ala-86–Arg-87, Asn-192, and Ser-215–His-217 contribute to the pyridoxal 5'-phosphate site. At Lys-218 the chain carries N6-(pyridoxal phosphate)lysine.

This sequence belongs to the SepCysS family. In terms of assembly, homodimer. Interacts with SepRS. It depends on pyridoxal 5'-phosphate as a cofactor.

The enzyme catalyses O-phospho-L-seryl-tRNA(Cys) + hydrogen sulfide + H(+) = L-cysteinyl-tRNA(Cys) + phosphate. Functionally, converts O-phospho-L-seryl-tRNA(Cys) (Sep-tRNA(Cys)) to L-cysteinyl-tRNA(Cys) (Cys-tRNA(Cys)). The polypeptide is O-phospho-L-seryl-tRNA:Cys-tRNA synthase (Methanococcus maripaludis (strain C6 / ATCC BAA-1332)).